We begin with the raw amino-acid sequence, 425 residues long: Enolase (425 aa).

Position 162 (Gln-162) interacts with (2R)-2-phosphoglycerate. Glu-204 serves as the catalytic Proton donor. The Mg(2+) site is built by Asp-241, Glu-288, and Asp-315. (2R)-2-phosphoglycerate is bound by residues Lys-340, Arg-369, Ser-370, and Lys-391. Residue Lys-340 is the Proton acceptor of the active site.

Belongs to the enolase family. The cofactor is Mg(2+).

It is found in the cytoplasm. It localises to the secreted. The protein resides in the cell surface. It catalyses the reaction (2R)-2-phosphoglycerate = phosphoenolpyruvate + H2O. It participates in carbohydrate degradation; glycolysis; pyruvate from D-glyceraldehyde 3-phosphate: step 4/5. Catalyzes the reversible conversion of 2-phosphoglycerate (2-PG) into phosphoenolpyruvate (PEP). It is essential for the degradation of carbohydrates via glycolysis. This is Enolase from Porphyromonas gingivalis (strain ATCC 33277 / DSM 20709 / CIP 103683 / JCM 12257 / NCTC 11834 / 2561).